We begin with the raw amino-acid sequence, 334 residues long: Putative ankyrin repeat protein RBE_0347 (334 aa).

4 ANK repeats span residues 80-90 (EQGINPNIQDS), 91-120 (SGNTLLLYACQSSLVEVVQFLLKKGANPNI), 124-161 (SDNTPLSKIISNRFIDKTEIYIAKLLLQNGALTELKDF), and 162-191 (VGFTPIQSATQYGHTEIVKSLIQNGADINV).

The protein is Putative ankyrin repeat protein RBE_0347 of Rickettsia bellii (strain RML369-C).